The following is a 131-amino-acid chain: Hydrogenase maturation factor HypA (131 aa).

His2 lines the Ni(2+) pocket. Zn(2+) is bound by residues Cys73, Cys76, Cys105, and Cys108.

Belongs to the HypA/HybF family.

Its function is as follows. Involved in the maturation of [NiFe] hydrogenases. Required for nickel insertion into the metal center of the hydrogenase. The polypeptide is Hydrogenase maturation factor HypA (Thermomicrobium roseum (strain ATCC 27502 / DSM 5159 / P-2)).